The primary structure comprises 426 residues: MIDVKDLSENPDKFRASQRARGADESVVDAIISADAARRAALIRFENLRAEQNAFGKKVAQAKGEEKQALLAEVKVLAASVKAASAEADVAQAQQEELLRAIPNLIVDGVPEGGEDDYIVVKTVGEPREFPDFEPKDHLEIGELIGAIDMERGAKVSGSRFYFLRGVGARLEMALLQMAMEQAIDAGFIPMITPTLVRPETMQGTGFDVKHDAEIYRLAEDDLYLVGTSEVALAGYHADEILDLSAGPIRYAGQSSCYRREAGSHGKDTRGIIRVHQFNKVEMFIYTTVEEAAAEHERLLAWEEEMLAKCELPYRVIDTAAGDLGNSAARKFDCEAWVPTQGAYRELTSTSNCTTFQARRLNIRERVLNEDGAPKGTRAVATLNGTLATTRWIVAILEHHQNEDGSVNVPRALQKYLGGLEVLPVL.

L-serine is bound at residue 228–230 (TSE). ATP contacts are provided by residues 259-261 (RRE) and valine 275. L-serine is bound at residue glutamate 282. Position 346-349 (346-349 (ELTS)) interacts with ATP. Threonine 386 contacts L-serine.

It belongs to the class-II aminoacyl-tRNA synthetase family. Type-1 seryl-tRNA synthetase subfamily. In terms of assembly, homodimer. The tRNA molecule binds across the dimer.

The protein resides in the cytoplasm. The catalysed reaction is tRNA(Ser) + L-serine + ATP = L-seryl-tRNA(Ser) + AMP + diphosphate + H(+). It catalyses the reaction tRNA(Sec) + L-serine + ATP = L-seryl-tRNA(Sec) + AMP + diphosphate + H(+). The protein operates within aminoacyl-tRNA biosynthesis; selenocysteinyl-tRNA(Sec) biosynthesis; L-seryl-tRNA(Sec) from L-serine and tRNA(Sec): step 1/1. In terms of biological role, catalyzes the attachment of serine to tRNA(Ser). Is also able to aminoacylate tRNA(Sec) with serine, to form the misacylated tRNA L-seryl-tRNA(Sec), which will be further converted into selenocysteinyl-tRNA(Sec). The protein is Serine--tRNA ligase of Arthrobacter sp. (strain FB24).